Reading from the N-terminus, the 679-residue chain is Glycine--tRNA ligase beta subunit (679 aa).

This sequence belongs to the class-II aminoacyl-tRNA synthetase family. In terms of assembly, tetramer of two alpha and two beta subunits.

Its subcellular location is the cytoplasm. It carries out the reaction tRNA(Gly) + glycine + ATP = glycyl-tRNA(Gly) + AMP + diphosphate. This Streptococcus pyogenes serotype M4 (strain MGAS10750) protein is Glycine--tRNA ligase beta subunit.